A 344-amino-acid polypeptide reads, in one-letter code: Dihydroorotate dehydrogenase (quinone) (344 aa).

Residues 61 to 65 and Thr-85 each bind FMN; that span reads AGLDK. Substrate is bound at residue Lys-65. 110 to 114 provides a ligand contact to substrate; sequence NRMGF. FMN-binding residues include Asn-138 and Asn-171. Position 171 (Asn-171) interacts with substrate. The active-site Nucleophile is the Ser-174. Asn-176 lines the substrate pocket. Residues Lys-216 and Thr-244 each contribute to the FMN site. 245–246 lines the substrate pocket; it reads NT. FMN contacts are provided by residues Gly-267, Gly-296, and 317-318; that span reads YS.

This sequence belongs to the dihydroorotate dehydrogenase family. Type 2 subfamily. As to quaternary structure, monomer. It depends on FMN as a cofactor.

It is found in the cell membrane. The catalysed reaction is (S)-dihydroorotate + a quinone = orotate + a quinol. It participates in pyrimidine metabolism; UMP biosynthesis via de novo pathway; orotate from (S)-dihydroorotate (quinone route): step 1/1. Its function is as follows. Catalyzes the conversion of dihydroorotate to orotate with quinone as electron acceptor. The protein is Dihydroorotate dehydrogenase (quinone) of Psychrobacter cryohalolentis (strain ATCC BAA-1226 / DSM 17306 / VKM B-2378 / K5).